An 856-amino-acid polypeptide reads, in one-letter code: Leucine--tRNA ligase (856 aa).

A 'HIGH' region motif is present at residues 53–63 (PYPSGNLHMGH). The 'KMSKS' region motif lies at 622–626 (KMSKS). Position 625 (Lys-625) interacts with ATP.

The protein belongs to the class-I aminoacyl-tRNA synthetase family.

Its subcellular location is the cytoplasm. The enzyme catalyses tRNA(Leu) + L-leucine + ATP = L-leucyl-tRNA(Leu) + AMP + diphosphate. This chain is Leucine--tRNA ligase, found in Prochlorococcus marinus (strain MIT 9312).